A 188-amino-acid chain; its full sequence is Kappa-casein (188 aa).

An N-terminal signal peptide occupies residues 1 to 21 (MMKSSFLIVPILALTLPFLGA). Residues threonine 143 and threonine 148 are each glycosylated (O-linked (GalNAc...) threonine). Position 163 is a phosphothreonine (threonine 163). Serine 167 carries the post-translational modification Phosphoserine; alternate. An O-linked (GalNAc...) serine; alternate glycan is attached at serine 167. A glycan (O-linked (GalNAc...) threonine) is linked at threonine 184. A Phosphoserine modification is found at serine 185.

It belongs to the kappa-casein family. In terms of tissue distribution, mammary gland specific. Secreted in milk.

The protein localises to the secreted. Functionally, kappa-casein stabilizes micelle formation, preventing casein precipitation in milk. In Sus scrofa (Pig), this protein is Kappa-casein (CSN3).